We begin with the raw amino-acid sequence, 414 residues long: Methyl-CpG-binding domain protein 2 (414 aa).

The interval 1–152 is required for interaction with DHX9 and PRMT5; that stretch reads MRAHPGGGRC…GPRATESGKR (152 aa). The disordered stretch occupies residues 1-163; the sequence is MRAHPGGGRC…DCPALPPGWK (163 aa). Positions 77-95 are enriched in basic residues; that stretch reads GRGRGRGRGRGRGRGRGRG. A compositionally biased stretch (gly residues) spans 98 to 123; it reads QSGGSGLGGDGGGGAGGCGGGSGGGV. An MBD domain is found at 148-216; it reads ESGKRMDCPA…SSFDFRTGKM (69 aa). Serine 184 is subject to Phosphoserine. Residues 217–244 are disordered; it reads MPSKLQKNKQRLRNDPLNQNKGKPDLNT. Over residues 232-244 the composition is skewed to polar residues; that stretch reads PLNQNKGKPDLNT. Residue serine 410 is modified to Phosphoserine.

Heterodimer with MBD3 (via N-terminus). Component of the MeCP1 complex that contains HDAC1 and HDAC2. Component of the nucleosome remodeling and deacetylase (NuRD) repressor complex, composed of core proteins MTA1, MTA2, MTA3, RBBP4, RBBP7, HDAC1, HDAC2, MBD2, MBD3, and peripherally associated proteins CDK2AP1, CDK2AP2, GATAD2A, GATAD2B, CHD3, CHD4 and CHD5. The exact stoichiometry of the NuRD complex is unknown, and some subunits such as MBD2 and MBD3, GATAD2A and GATAD2B, and CHD3, CHD4 and CHD5 define mutually exclusive NuRD complexes. Interacts with CDK2AP1. Interacts with DHX9. Interacts with DNMT1. Interacts with GATAD2A/p66-alpha. Interacts with GATAD2B/p66-beta. Interacts with GPN1. Interacts with MIZF. Interacts with PRMT5. Interacts with SIN3A. Interacts with SPHK2. Highly expressed in brain, heart, kidney, lung, skeletal muscle, spleen and testis. Detected at lower levels in embryonic stem cells.

The protein resides in the nucleus. It localises to the chromosome. Binds CpG islands in promoters where the DNA is methylated at position 5 of cytosine within CpG dinucleotides. Binds hemimethylated DNA as well. Recruits histone deacetylases and DNA methyltransferases to chromatin. Acts as a component of the histone deacetylase NuRD complex which participates in the remodeling of chromatin. Acts as transcriptional repressor and plays a role in gene silencing. Functions as a scaffold protein, targeting GATAD2A and GATAD2B to chromatin to promote repression. May enhance the activation of some unmethylated cAMP-responsive promoters. Selectively represses transcription activity of methylated rRNA promoters. This is Methyl-CpG-binding domain protein 2 from Mus musculus (Mouse).